The chain runs to 119 residues: Beta-2-microglobulin (119 aa).

An N-terminal signal peptide occupies residues 1–20 (MARFVAVALLVLLSLSGLET). The Ig-like C1-type domain maps to 25–114 (PKIQVYSRHP…VTFSTPKTVK (90 aa)). The cysteines at positions 45 and 100 are disulfide-linked.

It belongs to the beta-2-microglobulin family. As to quaternary structure, heterodimer of an alpha chain and a beta chain. Beta-2-microglobulin is the beta-chain of major histocompatibility complex class I molecules.

It is found in the secreted. Functionally, component of the class I major histocompatibility complex (MHC). Involved in the presentation of peptide antigens to the immune system. The chain is Beta-2-microglobulin (B2M) from Callicebus personatus personatus (Masked titi).